Reading from the N-terminus, the 142-residue chain is Spliceosomal protein DIB1 (142 aa).

It belongs to the DIM1 family. As to quaternary structure, component of the 25S [U4/U6.U5] tri-snRNP.

The protein resides in the nucleus. Essential role in pre-mRNA splicing. Also essential for entry into mitosis (G2/M progression) as well as for chromosome segregation during mitosis. The polypeptide is Spliceosomal protein DIB1 (DIB1) (Candida glabrata (strain ATCC 2001 / BCRC 20586 / JCM 3761 / NBRC 0622 / NRRL Y-65 / CBS 138) (Yeast)).